The primary structure comprises 170 residues: ATP synthase subunit b (170 aa).

A helical membrane pass occupies residues Phe30–Pro50.

It belongs to the ATPase B chain family. In terms of assembly, F-type ATPases have 2 components, F(1) - the catalytic core - and F(0) - the membrane proton channel. F(1) has five subunits: alpha(3), beta(3), gamma(1), delta(1), epsilon(1). F(0) has three main subunits: a(1), b(2) and c(10-14). The alpha and beta chains form an alternating ring which encloses part of the gamma chain. F(1) is attached to F(0) by a central stalk formed by the gamma and epsilon chains, while a peripheral stalk is formed by the delta and b chains.

The protein resides in the cell membrane. In terms of biological role, f(1)F(0) ATP synthase produces ATP from ADP in the presence of a proton or sodium gradient. F-type ATPases consist of two structural domains, F(1) containing the extramembraneous catalytic core and F(0) containing the membrane proton channel, linked together by a central stalk and a peripheral stalk. During catalysis, ATP synthesis in the catalytic domain of F(1) is coupled via a rotary mechanism of the central stalk subunits to proton translocation. Component of the F(0) channel, it forms part of the peripheral stalk, linking F(1) to F(0). This is ATP synthase subunit b from Mycobacterium ulcerans (strain Agy99).